Consider the following 595-residue polypeptide: uncharacterized protein (595 aa).

A disordered region spans residues 1 to 21 (MSSQLKSTWAPVPSTKPSQPC). 11 WD repeats span residues 56–95 (EHTA…KILK), 100–143 (AISG…GEIF), 144–184 (GHSS…FNRS), 187–226 (VHSK…QVYE), 229–268 (AHKG…LIRE), 313–352 (GHQR…AFPL), 356–393 (SHTN…FAKD), 433–472 (KTIY…LCEV), 477–516 (DSTA…VITS), 520–559 (FHTG…KYIA), and 564–594 (HSLG…WSVT).

Belongs to the WD repeat AIP1 family.

This is an uncharacterized protein from Schizosaccharomyces pombe (strain 972 / ATCC 24843) (Fission yeast).